Consider the following 171-residue polypeptide: MAQQKEHQQESEFLERLVAVNRVTKVVKGGRQFAFAALVVIGDGKGKVGYGYGKAKEVPVAIQKAMDQAKKNLVTIALNKDTLQHAITGHHGAARVFMQPASEGTGIIAGGAMRAVFDVVGVKDVLAKCQGTRNPGNVIRATINALTSMATPEKVAAKRGKSVEEILSHVQ.

An S5 DRBM domain is found at 13-76; sequence FLERLVAVNR…DQAKKNLVTI (64 aa).

Belongs to the universal ribosomal protein uS5 family. As to quaternary structure, part of the 30S ribosomal subunit. Contacts proteins S4 and S8.

With S4 and S12 plays an important role in translational accuracy. Functionally, located at the back of the 30S subunit body where it stabilizes the conformation of the head with respect to the body. The chain is Small ribosomal subunit protein uS5 from Dichelobacter nodosus (strain VCS1703A).